A 594-amino-acid chain; its full sequence is Fidgetin-like protein 1 (594 aa).

2 disordered regions span residues 1-79 (MYSP…DDEL) and 239-261 (QSIG…KRCS). A compositionally biased stretch (polar residues) spans 56–73 (PSDSAQQQPPFKSRSQQN). ATP-binding positions include Ala-319 and 359 to 364 (GTGKTM).

Belongs to the AAA ATPase family. Hexamer. It depends on Mg(2+) as a cofactor. As to expression, expressed in germ cells.

The protein localises to the nucleus. It carries out the reaction ATP + H2O = ADP + phosphate + H(+). In terms of biological role, has a role in spindle assembly which acts in the progression through mitosis during embryogenesis. Required for fertility. The sequence is that of Fidgetin-like protein 1 (figl-1) from Caenorhabditis elegans.